A 507-amino-acid polypeptide reads, in one-letter code: F-box only protein 31 (507 aa).

Positions Arg19–Glu42 are disordered. A Phosphoserine modification is found at Ser33. Positions Ser33 to Glu42 are enriched in acidic residues. Thr37 bears the Phosphothreonine mark. A D box motif is present at residues Arg50–Glu55. Residues Arg50 to Arg96 enclose the F-box domain. 4 residues coordinate Zn(2+): Cys192, His200, Cys216, and His222. Phosphoserine; by ATM is present on Ser264. Positions Asp283 to Leu285 match the DDL motif motif. A disordered region spans residues Arg364–Ser421. Basic and acidic residues predominate over residues Ala374–Glu385. Phosphoserine is present on Ser448.

It belongs to the FBXO31 family. As to quaternary structure, part of a SCF (SKP1-cullin-F-box) protein ligase complex SCF(FBXO31) composed of CUL1, SKP1, RBX1 and FBXO31. Interacts (when phosphorylated at Ser-33) with CDC20, promoting ubiquitination by the APC/C complex. Post-translationally, phosphorylation at Ser-264 by ATM following gamma-irradiation results in its stabilization. Phosphorylation at Ser-448 in absence of stress promotes its ubiquitination and degradation by the SCF(FBXO46) complex. Phosphorylation at Ser-33 by AKT1 promotes association with CDC20 and ubiquitination by the APC/C complex. In terms of processing, ubiquitinated by the SCF(FBXO46) complex in absence of stress, promoting its degradation. Ubiquitinated by the APC/C complex following phosphorylation at Ser-33, leading to its degradation by the proteasome.

It localises to the cytoplasm. Its subcellular location is the cytoskeleton. The protein resides in the microtubule organizing center. It is found in the centrosome. It functions in the pathway protein modification; protein ubiquitination. Its function is as follows. Substrate-recognition component of the SCF(FBXO31) protein ligase complex, which specifically mediates the ubiquitination of proteins amidated at their C-terminus in response to oxidative stress, leading to their degradation by the proteasome. FBXO31 specifically recognizes and binds C-terminal peptides bearing an amide: C-terminal amidation in response to oxidative stress takes place following protein fragmentation. The SCF(FBXO31) also plays a role in G1 arrest following DNA damage by mediating ubiquitination of phosphorylated cyclin-D1 (CCND1), promoting its degradation by the proteasome, resulting in G1 arrest. The SCF(FBXO31) complex is however not a major regulator of CCND1 stability during the G1/S transition. In response to genotoxic stress, the SCF(FBXO31) complex directs ubiquitination and degradation of phosphorylated MDM2, thereby promoting p53/TP53-mediated DNA damage response. SCF(FBXO31) complex is required for genomic integrity by catalyzing ubiquitination and degradation of cyclin-A (CCNA1 and/or CCNA2) during the G1 phase. In response to genotoxic stress, the SCF(FBXO31) complex directs ubiquitination and degradation of phosphorylated FBXO46 and MAP2K6. SCF(FBXO31) complex promotes ubiquitination and degradation of CDT1 during the G2 phase to prevent re-replication. The SCF(FBXO31) complex also mediates ubiquitination and degradation of DUSP6, OGT and PARD6A. The sequence is that of F-box only protein 31 from Rattus norvegicus (Rat).